Consider the following 436-residue polypeptide: YRLTYYTPDYQVAETDILAAFRMTPQPGVPAEECGAAVAAESSTGTWTTVWTDGLTQLDKYKGRCYDLEPVPGESNQYIAYVAYPIDLFEEGSVTNLLTSIVGNVFGFKALRSLRLEDLRIPPAYAKTFWGPPHGIQVERDKLNKYGRPLLGCTIKPKLGLSAKYYGRAVYECLRGGLDFTKDDENVNSQAFMRWRDRFLFCAEAIYKAQSETGEVKGHYLNATGGTVEEMYKRANYAAQIGVPIIMHDYITGGFTANTSLSMFCRDNGLLLHIHRAMHAVIDRQRNHGIHFRVLAKTLRMSGGDHLHSGTVVGKLEGEREVTLGFVDLMRDPYIEKDRSRGIYFTQDWCGMGGVMPVASGGIHVWHMPALTEIFGDDACLQFGGGTLGHPWGNAPGAVANRVASEACVQARNEGRDLSREGGDVIREACKWSPEL.

Residues asparagine 104 and threonine 154 each contribute to the substrate site. Lysine 156 acts as the Proton acceptor in catalysis. Residue lysine 158 coordinates substrate. Mg(2+)-binding residues include lysine 182, aspartate 184, and glutamate 185. N6-carboxylysine is present on lysine 182. The Proton acceptor role is filled by histidine 275. Positions 276, 308, and 360 each coordinate substrate.

Belongs to the RuBisCO large chain family. Type I subfamily. Heterohexadecamer of 8 large chains and 8 small chains. Requires Mg(2+) as cofactor.

It is found in the plastid. It localises to the chloroplast. It catalyses the reaction 2 (2R)-3-phosphoglycerate + 2 H(+) = D-ribulose 1,5-bisphosphate + CO2 + H2O. The enzyme catalyses D-ribulose 1,5-bisphosphate + O2 = 2-phosphoglycolate + (2R)-3-phosphoglycerate + 2 H(+). Its function is as follows. RuBisCO catalyzes two reactions: the carboxylation of D-ribulose 1,5-bisphosphate, the primary event in carbon dioxide fixation, as well as the oxidative fragmentation of the pentose substrate in the photorespiration process. Both reactions occur simultaneously and in competition at the same active site. This is Ribulose bisphosphate carboxylase large chain from Euglena viridis (Cercaria viridis).